Reading from the N-terminus, the 1850-residue chain is Voltage-dependent L-type calcium channel subunit alpha-1S (1850 aa).

Positions 1 to 23 (MEPSSPQDEGLRKKQPKKPVPEI) are disordered. Topologically, residues 1 to 51 (MEPSSPQDEGLRKKQPKKPVPEILPRPPRALFCLTLQNPLRKACISVVEWK) are cytoplasmic. The stretch at 38 to 337 (NPLRKACISV…LVLGVLSGEF (300 aa)) is one I repeat. Residues 52–70 (PFETIILLTIFANCVALAV) traverse the membrane as a helical segment. Residues 71–85 (YLPMPEDDNNTLNLG) lie on the Extracellular side of the membrane. The helical transmembrane segment at 86–106 (LEKLEYFFLIVFSIEAAMKII) threads the bilayer. At 107-115 (AYGFLFHQD) the chain is on the cytoplasmic side. The helical transmembrane segment at 116–136 (AYLRSGWNVLDFIIVFLGVFT) threads the bilayer. At 137-160 (AILEQVNIIQTNTAPMSSKGAGLD) the chain is on the extracellular side. Residues 161 to 179 (VKALRAFRVLRPLRLVSGV) traverse the membrane as a helical segment. At 180–196 (PSLQVVLNSIFKAMLPL) the chain is on the cytoplasmic side. The chain crosses the membrane as a helical span at residues 197-218 (FHIALLVLFMVIIYAIIGLELF). The Extracellular segment spans residues 219–279 (KGKMHKTCYF…HGITHFDNFG (61 aa)). 2 disulfide bridges follow: Cys226-Cys254 and Cys245-Cys261. An intramembrane region (pore-forming) is located at residues 280–301 (FSMLTVYQCISMEGWTDVLYWV). A Selectivity filter of repeat I motif is present at residues 290–293 (SMEG). Position 292 (Glu292) interacts with Ca(2+). Residues 302-309 (NDAIGNEW) are Extracellular-facing. The chain crosses the membrane as a helical span at residues 310-330 (PWIYFVTLILLGSFFILNLVL). At 331–432 (GVLSGEFTKE…WKCHDLVKSK (102 aa)) the chain is on the cytoplasmic side. A binding to the beta subunit region spans residues 357–374 (QQLEEDLRGYMSWITQGE). Ser393 and Ser397 each carry phosphoserine. An II repeat occupies 418–664 (NRVFRWKCHD…VFLAIAVDNL (247 aa)). The chain crosses the membrane as a helical span at residues 433-451 (VFYWLVILIVALNTLSIAS). Over 452–462 (EHHNQPLWLTH) the chain is Extracellular. A helical membrane pass occupies residues 463 to 483 (LQDVANRVLLALFTIEMLMKM). Residues 484 to 494 (YGLGLRQYFMS) lie on the Cytoplasmic side of the membrane. A helical membrane pass occupies residues 495–514 (IFNRFDCFVVCSGILEILLV). At 515 to 523 (ESGAMTPLG) the chain is on the extracellular side. A helical membrane pass occupies residues 524-542 (ISVLRCIRLLRLFKITKYW). The Cytoplasmic segment spans residues 543 to 561 (TSLSNLVASLLNSIRSIAS). A helical membrane pass occupies residues 562-581 (LLLLLFLFMIIFALLGMQLF). The Extracellular segment spans residues 582–601 (GGRYDFEDTEVRRSNFDNFP). An intramembrane region (pore-forming) is located at residues 602–623 (QALISVFQVLTGEDWNSVMYNG). The Selectivity filter of repeat II signature appears at 612–615 (TGED). A Ca(2+)-binding site is contributed by Glu614. The Extracellular segment spans residues 624 to 633 (IMAYGGPSYP). A helical membrane pass occupies residues 634–653 (GVLVCIYFIILFVCGNYILL). At 654-799 (NVFLAIAVDN…VLCHRIVNAT (146 aa)) the chain is on the cytoplasmic side. Disordered regions lie at residues 673-717 (AQKA…IPTT) and 731-758 (EVKDPYPSADFPGDDEEDEPEIPASPRP). Residue Ser687 is modified to Phosphoserine; by PKA. A compositionally biased stretch (basic and acidic residues) spans 690–711 (LPDKSEEERSTMTKKLEQKPKG). The segment covering 742–751 (PGDDEEDEPE) has biased composition (acidic residues). An III repeat occupies 786 to 1068 (NKIRVLCHRI…IFVGFVIVTF (283 aa)). The chain crosses the membrane as a helical span at residues 800–818 (WFTNFILLFILLSSAALAA). The Extracellular segment spans residues 819–830 (EDPIRADSMRNQ). Residues 831–850 (ILEYFDYVFTAVFTVEIVLK) traverse the membrane as a helical segment. Residues 851–866 (MTTYGAFLHKGSFCRN) are Cytoplasmic-facing. Residues 867–885 (YFNILDLLVVAVSLISMGL) form a helical membrane-spanning segment. Residues 886 to 892 (ESSAISV) are Extracellular-facing. Residues 893–911 (VKILRVLRVLRPLRAINRA) traverse the membrane as a helical segment. Topologically, residues 912 to 930 (KGLKHVVQCVFVAIRTIGN) are cytoplasmic. A helical membrane pass occupies residues 931 to 950 (IVLVTTLLQFMFACIGVQLF). The Extracellular portion of the chain corresponds to 951–1000 (KGKFYSCNDLSKMTEEECRGYYYIYKDGDPTQIELRPRQWIHNDFHFDNV). A disulfide bond links Cys957 and Cys968. The interval 988-1077 (RQWIHNDFHF…FQEQGETEYK (90 aa)) is dihydropyridine binding. Positions 1001–1021 (LSAMMSLFTVSTFEGWPQLLY) form an intramembrane region, pore-forming. A Selectivity filter of repeat III motif is present at residues 1012–1015 (TFEG). Glu1014 is a binding site for Ca(2+). Residues 1022-1038 (KAIDSNEEDTGPVYNNR) lie on the Extracellular side of the membrane. A helical transmembrane segment spans residues 1039 to 1060 (VEMAIFFIIYIILIAFFMMNIF). The Cytoplasmic portion of the chain corresponds to 1061 to 1118 (VGFVIVTFQEQGETEYKNCELDKNQRQCVQYALKARPLRCYIPKNPYQYQVWYVVTSS). Residues 1105–1384 (NPYQYQVWYV…LFVAVIMDNF (280 aa)) form an IV repeat. A helical transmembrane segment spans residues 1119-1140 (YFEYLMFALIMLNTICLGMQHY). The N-linked (GlcNAc...) asparagine glycan is linked to Asn1141. Over 1141-1148 (NQSEQMNH) the chain is Extracellular. The chain crosses the membrane as a helical span at residues 1149-1170 (ISDILNVAFTIIFTLEMILKLI). Residues 1171-1180 (AFKPRGYFGD) are Cytoplasmic-facing. Residues 1181–1200 (PWNVFDFLIVIGSIIDVILS) traverse the membrane as a helical segment. Topologically, residues 1201 to 1231 (EIDTLLASSGGLYCLGGGCGNVDPDESARIS) are extracellular. Residues 1232–1250 (SAFFRLFRVMRLIKLLSRA) traverse the membrane as a helical segment. At 1251–1268 (EGVRTLLWTFIKSFQALP) the chain is on the cytoplasmic side. A helical transmembrane segment spans residues 1269–1289 (YVALLIVMLFFIYAVIGMQMF). Topologically, residues 1290-1311 (GKIAMVDGTQINRNNNFQTFPQ) are extracellular. The segment at residues 1312–1330 (AVLLLFRCATGEAWQEILL) is an intramembrane region (pore-forming). A Selectivity filter of repeat IV motif is present at residues 1321–1324 (TGEA). At 1331–1356 (ACSYGKRCDPESDYAPGEEYACGTNF) the chain is on the extracellular side. The interval 1337–1403 (RCDPESDYAP…LGPHHLDEFK (67 aa)) is dihydropyridine binding. Cysteines 1338 and 1352 form a disulfide. A phenylalkylamine binding region spans residues 1349–1391 (EYACGTNFAYYYFISFYMLCAFLIINLFVAVIMDNFDYLTRDW). A helical transmembrane segment spans residues 1357 to 1381 (AYYYFISFYMLCAFLIINLFVAVIM). At 1382-1850 (DNFDYLTRDW…PKGGAMPREP (469 aa)) the chain is on the cytoplasmic side. The interaction with calmodulin stretch occupies residues 1522-1542 (KFYATFLIQEHFRKFMKRQEE). Phosphoserine; by PKA and CAMK2 is present on Ser1575. The residue at position 1579 (Thr1579) is a Phosphothreonine. Ser1617 carries the post-translational modification Phosphoserine; by PKA. The interval 1697-1779 (PVTREGPFSQ…FEERVPRNSA (83 aa)) is disordered. Polar residues predominate over residues 1706 to 1716 (QPCSVSGVNSR). Basic and acidic residues-rich tracts occupy residues 1717–1726 (SHVDKLERQM) and 1745–1756 (QEKHPVHEEGKG).

This sequence belongs to the calcium channel alpha-1 subunit (TC 1.A.1.11) family. CACNA1S subfamily. Component of a calcium channel complex consisting of a pore-forming alpha subunit (CACNA1S) and the ancillary subunits CACNB1 or CACNB2, CACNG1 and CACNA2D1. The channel complex contains alpha, beta, gamma and delta subunits in a 1:1:1:1 ratio, i.e. it contains either CACNB1 or CACNB2. CACNA1S channel activity is modulated by the auxiliary subunits (CACNB1 or CACNB2, CACNG1 and CACNA2D1). Interacts with DYSF and JSRP1. Interacts with RYR1. Interacts with STAC, STAC2 and STAC3 (via their SH3 domains). Interacts with CALM. The alpha-1S subunit is found in two isoforms in the skeletal muscle: a minor form of 212 kDa containing the complete amino acid sequence, and a major form of 190 kDa derived from the full-length form by post-translational proteolysis close to Phe-1690. Post-translationally, phosphorylated. Phosphorylation by PKA activates the calcium channel. Both the minor and major forms are phosphorylated in vitro by PKA. Phosphorylation at Ser-1575 is involved in beta-adrenergic-mediated regulation of the channel. Skeletal muscle specific.

It is found in the cell membrane. It localises to the sarcolemma. The protein localises to the T-tubule. The enzyme catalyses Ca(2+)(in) = Ca(2+)(out). With respect to regulation, channel activity is blocked by dihydropyridines (DHP), phenylalkylamines, and by benzothiazepines. Pore-forming, alpha-1S subunit of the voltage-gated calcium channel that gives rise to L-type calcium currents in skeletal muscle. Calcium channels containing the alpha-1S subunit play an important role in excitation-contraction coupling in skeletal muscle via their interaction with RYR1, which triggers Ca(2+) release from the sarcplasmic reticulum and ultimately results in muscle contraction. Long-lasting (L-type) calcium channels belong to the 'high-voltage activated' (HVA) group. The chain is Voltage-dependent L-type calcium channel subunit alpha-1S (Cacna1s) from Rattus norvegicus (Rat).